Here is a 156-residue protein sequence, read N- to C-terminus: UPF0336 protein SACE_6876 (156 aa).

In terms of domain architecture, MaoC-like spans 8–128; the sequence is IGREYPPTPA…DFLTVRAEIT (121 aa).

Belongs to the UPF0336 family.

This is UPF0336 protein SACE_6876 from Saccharopolyspora erythraea (strain ATCC 11635 / DSM 40517 / JCM 4748 / NBRC 13426 / NCIMB 8594 / NRRL 2338).